The chain runs to 160 residues: Serine-protein kinase RsbW (160 aa).

It belongs to the anti-sigma-factor family.

It carries out the reaction L-seryl-[protein] + ATP = O-phospho-L-seryl-[protein] + ADP + H(+). The enzyme catalyses L-threonyl-[protein] + ATP = O-phospho-L-threonyl-[protein] + ADP + H(+). Negative regulator of sigma-B activity. Phosphorylates and inactivates its specific antagonist protein, RsbV. Upon phosphorylation of RsbV, RsbW is released and binds to sigma-B, thereby blocking its ability to form an RNA polymerase holoenzyme (E-sigma-B). The chain is Serine-protein kinase RsbW from Bacillus cereus (strain G9842).